The primary structure comprises 567 residues: Arginine--tRNA ligase (567 aa).

The 'HIGH' region signature appears at 121 to 131 (ANPNGPLHVGH).

This sequence belongs to the class-I aminoacyl-tRNA synthetase family.

Its subcellular location is the cytoplasm. It catalyses the reaction tRNA(Arg) + L-arginine + ATP = L-arginyl-tRNA(Arg) + AMP + diphosphate. This chain is Arginine--tRNA ligase, found in Methanococcoides burtonii (strain DSM 6242 / NBRC 107633 / OCM 468 / ACE-M).